We begin with the raw amino-acid sequence, 204 residues long: CDP-archaeol synthase (204 aa).

Helical transmembrane passes span 5-25 (VYAC…YVIL), 43-63 (MLWV…SRLV), 91-111 (FEGF…LAYA), 116-136 (GVSA…GAFV), 147-167 (PAIL…QGLF), and 175-195 (VVVA…MAAF).

This sequence belongs to the CDP-archaeol synthase family. It depends on Mg(2+) as a cofactor.

It is found in the cell membrane. The enzyme catalyses 2,3-bis-O-(geranylgeranyl)-sn-glycerol 1-phosphate + CTP + H(+) = CDP-2,3-bis-O-(geranylgeranyl)-sn-glycerol + diphosphate. Its pathway is membrane lipid metabolism; glycerophospholipid metabolism. In terms of biological role, catalyzes the formation of CDP-2,3-bis-(O-geranylgeranyl)-sn-glycerol (CDP-archaeol) from 2,3-bis-(O-geranylgeranyl)-sn-glycerol 1-phosphate (DGGGP) and CTP. This reaction is the third ether-bond-formation step in the biosynthesis of archaeal membrane lipids. This is CDP-archaeol synthase from Thermofilum pendens (strain DSM 2475 / Hrk 5).